We begin with the raw amino-acid sequence, 215 residues long: Probable transaldolase (215 aa).

The Schiff-base intermediate with substrate role is filled by K83.

The protein belongs to the transaldolase family. Type 3B subfamily.

The protein resides in the cytoplasm. The enzyme catalyses D-sedoheptulose 7-phosphate + D-glyceraldehyde 3-phosphate = D-erythrose 4-phosphate + beta-D-fructose 6-phosphate. The protein operates within carbohydrate degradation; pentose phosphate pathway; D-glyceraldehyde 3-phosphate and beta-D-fructose 6-phosphate from D-ribose 5-phosphate and D-xylulose 5-phosphate (non-oxidative stage): step 2/3. Functionally, transaldolase is important for the balance of metabolites in the pentose-phosphate pathway. In Anaeromyxobacter sp. (strain Fw109-5), this protein is Probable transaldolase.